Consider the following 1141-residue polypeptide: IgM protease (1141 aa).

The signal sequence occupies residues 1 to 32; that stretch reads MNIQERFSLRKSAVGLVSVSLLCAIYTSTVAA. Residue Cys-195 is the Nucleophile of the active site. 4 disordered regions span residues 518-544, 725-749, 781-805, and 839-860; these read PDLP…STNL, EKDS…NVET, LEKD…TNVE, and EKDS…ESTS. Over residues 526–544 the composition is skewed to polar residues; the sequence is STVSDVDSLSSQETSSTNL. 2 stretches are compositionally biased toward low complexity: residues 738–749 and 795–805; these read EPTSSESTNVET and EPTSSESTNVE. Residues 1119–1136 traverse the membrane as a helical segment; that stretch reads IMGVGLLTLVLGSALGLL.

The protein belongs to the peptidase C66 family.

It is found in the cell membrane. The protein localises to the secreted. With respect to regulation, igM cleavage is inhibited by iodoacetamide but not by AEBSF, bestatin, E-64, Z-LVG-CHN(2), or EDTA. Catalyzes the specific cleavage of porcine IgM bound to the bacterial surface. Can degrade only IgM but neither IgG nor IgA, and is host specific, as it exclusively cleaves porcine IgM but not IgM from six other species, including human, mouse and a closely related member of the Suidae family. Promotes survival in porcine blood. Is thus involved in a so-far-unknown mechanism of host-pathogen interaction at an early stage of the host immune response. This Streptococcus suis (strain P1/7) protein is IgM protease (ide).